The primary structure comprises 419 residues: MKQTITEKIFSDHVGAQVYAGEIVESKIDMVIGNDITTPISIRQFEKSGAAHLANPDGFAIVMDHYIPTKDIASANQAKISREFAYKHNLKNFFDEKDIGIEHALIPEKGLVVSGDVIIGADSHTCTHGALGAFSTGMGSTDIAYAMITGKNWFKVPKSIKVVLKGRLGEHIYGKDLILKLISMIGVDGALYKALEFCGDIQNIDMDSRFSMCNMAIEAGAKSGIIAADEITKQFFKDKNLRAEPKYFYSDEDAFYERTVEIDMSALEPMVAYPFLPSNGKTITQAVADELKIDQAFIGSCTNGRLSDLRIAAEILKGKKVAKKTRLIITPATQKIYKAAEHEGLIDIFIDAGAVVSNPTCGACLGGYMGILGANERCVSTTNRNFVGRMGDRTSEVYLANSAVVAASAITGKITDPRR.

3 residues coordinate [4Fe-4S] cluster: cysteine 301, cysteine 361, and cysteine 364.

This sequence belongs to the aconitase/IPM isomerase family. LeuC type 2 subfamily. As to quaternary structure, heterodimer of LeuC and LeuD. [4Fe-4S] cluster is required as a cofactor.

The catalysed reaction is (2R,3S)-3-isopropylmalate = (2S)-2-isopropylmalate. Its pathway is amino-acid biosynthesis; L-leucine biosynthesis; L-leucine from 3-methyl-2-oxobutanoate: step 2/4. In terms of biological role, catalyzes the isomerization between 2-isopropylmalate and 3-isopropylmalate, via the formation of 2-isopropylmaleate. This chain is 3-isopropylmalate dehydratase large subunit, found in Campylobacter hominis (strain ATCC BAA-381 / DSM 21671 / CCUG 45161 / LMG 19568 / NCTC 13146 / CH001A).